A 415-amino-acid polypeptide reads, in one-letter code: F-box protein At3g13820 (415 aa).

In terms of domain architecture, F-box spans 1–50 (MTTMSNLPAEVLEEILSRTPVTSLRTMRSTCKKWNNLSKKKIIPEAARKQ). 2 disordered regions span residues 209–229 (NDYDDQEDEEEEDDEEYEDDD) and 387–415 (KQPKGKRKGRSSETKSNKNKKGRKIKIIG). Residues 210-229 (DYDDQEDEEEEDDEEYEDDD) show a composition bias toward acidic residues. Basic residues predominate over residues 403–415 (NKNKKGRKIKIIG).

This chain is F-box protein At3g13820, found in Arabidopsis thaliana (Mouse-ear cress).